We begin with the raw amino-acid sequence, 154 residues long: Myoglobin (154 aa).

Residues 2–148 form the Globin domain; that stretch reads GLSDGEWQMV…FRNDIAAKYK (147 aa). Ser4 and Ser32 each carry phosphoserine. A nitrite-binding site is contributed by His65. An O2-binding site is contributed by His65. Phosphothreonine is present on Thr68. His94 contributes to the heme b binding site. Residues Ser121 and Ser133 each carry the phosphoserine modification.

The protein belongs to the globin family. In terms of assembly, monomeric.

The protein resides in the cytoplasm. It is found in the sarcoplasm. The enzyme catalyses Fe(III)-heme b-[protein] + nitric oxide + H2O = Fe(II)-heme b-[protein] + nitrite + 2 H(+). It carries out the reaction H2O2 + AH2 = A + 2 H2O. Monomeric heme protein which primary function is to store oxygen and facilitate its diffusion within muscle tissues. Reversibly binds oxygen through a pentacoordinated heme iron and enables its timely and efficient release as needed during periods of heightened demand. Depending on the oxidative conditions of tissues and cells, and in addition to its ability to bind oxygen, it also has a nitrite reductase activity whereby it regulates the production of bioactive nitric oxide. Under stress conditions, like hypoxia and anoxia, it also protects cells against reactive oxygen species thanks to its pseudoperoxidase activity. This Rattus norvegicus (Rat) protein is Myoglobin.